The chain runs to 437 residues: Vacuolar cation/proton exchanger 2 (437 aa).

The segment at 1–29 (MMGAEKAEGMEELELEEGGGSPSPSPMTA) is disordered. Topologically, residues 1–65 (MMGAEKAEGM…KWRRALTSVR (65 aa)) are cytoplasmic. The chain crosses the membrane as a helical span at residues 66–86 (VVILQAKINVLLPFGPLAVML). Topologically, residues 87 to 88 (HY) are extracellular. A helical transmembrane segment spans residues 89–109 (LSANHQGWVFLFSLIGITPLA). The Cytoplasmic segment spans residues 110 to 126 (ERLGYATEQLALYTGPT). A helical membrane pass occupies residues 127-147 (IGGLLNATFGNATEMIISLYA). The interval 136 to 171 (GNATEMIISLYALKNGMIRVVQQSLLGSILSNMLLV) is cation selection. Residues 148–161 (LKNGMIRVVQQSLL) are Extracellular-facing. The chain crosses the membrane as a helical span at residues 162 to 182 (GSILSNMLLVLGCAFFAGGLV). The Cytoplasmic segment spans residues 183–194 (HPSRDQVFNKAS). A helical transmembrane segment spans residues 195 to 215 (AVVNSGLLLMAVLGLMFPAVL). Residues 216 to 228 (HFTHSEVQYGKSE) are Extracellular-facing. Residues 229-249 (VSLSRFSSCIMLVAYASYLFF) traverse the membrane as a helical segment. Over 250 to 281 (QLKSQRSLYSPIGEQEEEVTEDEEEEKEITQG) the chain is Cytoplasmic. The helical transmembrane segment at 282–302 (EAICWLFVLTIWISILSGYLV) threads the bilayer. Over 303–310 (DAIQGASE) the chain is Extracellular. The helical transmembrane segment at 311 to 331 (SLNMPVAFISVILLPIVGNAA) threads the bilayer. Positions 328–363 (GNAAEHASAIMFAMKDKLDITLGVAIGSSTQISMFV) are cation selection. Over 332–352 (EHASAIMFAMKDKLDITLGVA) the chain is Cytoplasmic. Residues 353-373 (IGSSTQISMFVIPFCVVIGWI) traverse the membrane as a helical segment. Residues 374–379 (MGQQMD) are Extracellular-facing. Residues 380-400 (LNFQLFETATLFITVLVVAFM) form a helical membrane-spanning segment. At 401 to 408 (LQEGTSNY) the chain is on the cytoplasmic side. Residues 409–429 (FKGLMLILCYLIVAASFFVHV) traverse the membrane as a helical segment. At 430–437 (DPDSSNNK) the chain is on the extracellular side.

This sequence belongs to the Ca(2+):cation antiporter (CaCA) (TC 2.A.19) family. Cation/proton exchanger (CAX) subfamily. Expressed in roots and shoots.

Its subcellular location is the vacuole membrane. Its function is as follows. Vacuolar cation/proton exchanger (CAX). Translocates Ca(2+) and other metal ions into vacuoles using the proton gradient formed by H(+)-ATPase and H(+)-pyrophosphatase. The polypeptide is Vacuolar cation/proton exchanger 2 (CAX2) (Oryza sativa subsp. japonica (Rice)).